Here is a 210-residue protein sequence, read N- to C-terminus: 23.6 kDa heat shock protein, mitochondrial (210 aa).

The transit peptide at 1–31 (MASALALKRLLSSSIAPRSRSVLRPAVSSRL) directs the protein to the mitochondrion. The 111-residue stretch at 100 to 210 (MGASGARRGW…RNDVRQIEIN (111 aa)) folds into the sHSP domain. The tract at residues 145-165 (GEGKNEEDGGEEGESGNRRFT) is disordered.

Belongs to the small heat shock protein (HSP20) family. May form oligomeric structures.

It localises to the mitochondrion. This Arabidopsis thaliana (Mouse-ear cress) protein is 23.6 kDa heat shock protein, mitochondrial (HSP23.6).